The chain runs to 721 residues: Mitogen-activated protein kinase 6 (721 aa).

The Protein kinase domain maps to 20–316 (YMDLKPLGCG…AEEALSHPYM (297 aa)). ATP is bound by residues 26–34 (LGCGGNGLV) and Lys-49. The active-site Proton acceptor is the Asp-152. Phosphothreonine is present on Thr-626. A TXY motif is present at residues 626 to 628 (TSY). Residue Tyr-628 is modified to Phosphotyrosine.

Belongs to the protein kinase superfamily. CMGC Ser/Thr protein kinase family. MAP kinase subfamily. It depends on Mg(2+) as a cofactor. Dually phosphorylated on Thr-626 and Tyr-628, which activates the enzyme.

It catalyses the reaction L-seryl-[protein] + ATP = O-phospho-L-seryl-[protein] + ADP + H(+). It carries out the reaction L-threonyl-[protein] + ATP = O-phospho-L-threonyl-[protein] + ADP + H(+). Its activity is regulated as follows. Activated by threonine and tyrosine phosphorylation. In terms of biological role, phosphorylates microtubule-associated protein 2 (MAP2). May promote entry in the cell cycle. The chain is Mitogen-activated protein kinase 6 (MAPK6) from Gallus gallus (Chicken).